The following is a 358-amino-acid chain: DNA replication and repair protein RecF (358 aa).

Position 30 to 37 (30 to 37 (GNNGSGKT)) interacts with ATP.

The protein belongs to the RecF family.

It localises to the cytoplasm. Functionally, the RecF protein is involved in DNA metabolism; it is required for DNA replication and normal SOS inducibility. RecF binds preferentially to single-stranded, linear DNA. It also seems to bind ATP. The chain is DNA replication and repair protein RecF from Actinobacillus succinogenes (strain ATCC 55618 / DSM 22257 / CCUG 43843 / 130Z).